The chain runs to 1828 residues: Proteasome activator complex subunit 4 (1828 aa).

HEAT repeat units follow at residues 462–506 (PEGP…LVDC), 985–1024 (NFCC…NHGG), 1164–1202 (YVLP…QLKR), 1339–1377 (DAFL…GSKH), 1621–1659 (PVQV…YNLF), and 1665–1703 (EESV…CNFL). Residues 1635-1723 (ARSSSWHARY…EALCKTRLPK (89 aa)) form a bromodomain-like (BRDL) region.

The protein belongs to the BLM10 family. Homodimer. Interacts with the 20S and 26S proteasomes.

It localises to the cytoplasm. The protein resides in the cytosol. Its subcellular location is the nucleus. The protein localises to the nucleus speckle. Associated component of the proteasome that specifically recognizes acetylated histones and promotes ATP- and ubiquitin-independent degradation of core histones during DNA damage response. Recognizes and binds acetylated histones via its bromodomain-like (BRDL) region and activates the proteasome by opening the gated channel for substrate entry. Binds to the core proteasome via its C-terminus, which occupies the same binding sites as the proteasomal ATPases, opening the closed structure of the proteasome via an active gating mechanism. involved in DNA damage response in somatic cells: binds to acetylated histones and promotes degradation of histones. The chain is Proteasome activator complex subunit 4 (psme4) from Xenopus laevis (African clawed frog).